A 40-amino-acid polypeptide reads, in one-letter code: ILVANRGEIAVRLLEEAPSPALTPELRITAYLPSGGPFVR.

Residues 1–40 enclose the Biotin carboxylation domain; that stretch reads ILVANRGEIAVRLLEEAPSPALTPELRITAYLPSGGPFVR. The ATP-grasp domain occupies 13–27; sequence LLEEAPSPALTPELR.

Acetyl-CoA carboxylase is a heterohexamer of biotin carboxyl carrier protein, biotin carboxylase and the two subunits of carboxyl transferase in a 2:2 complex. Mg(2+) serves as cofactor. Mn(2+) is required as a cofactor.

It carries out the reaction N(6)-biotinyl-L-lysyl-[protein] + hydrogencarbonate + ATP = N(6)-carboxybiotinyl-L-lysyl-[protein] + ADP + phosphate + H(+). It participates in lipid metabolism; malonyl-CoA biosynthesis; malonyl-CoA from acetyl-CoA: step 1/1. Its function is as follows. This protein is a component of the acetyl coenzyme A carboxylase complex; first, biotin carboxylase catalyzes the carboxylation of the carrier protein and then the transcarboxylase transfers the carboxyl group to form malonyl-CoA. This is Biotin carboxylase from Populus euphratica (Euphrates poplar).